We begin with the raw amino-acid sequence, 66 residues long: Stress-associated endoplasmic reticulum protein 1 (66 aa).

Residues 1-31 (MVAKQRIRMANEKHSKNITQRGNVAKTSRNA) are disordered. Residues 17 to 30 (NITQRGNVAKTSRN) are compositionally biased toward polar residues. Residues 39–59 (GPWLLALFIFVVCGSAIFQII) form a helical membrane-spanning segment.

It belongs to the RAMP4 family. Interacts with SEC61B, SEC61A1 and the SEC61 complex. Interacts with CANX.

Its subcellular location is the membrane. The protein localises to the endoplasmic reticulum membrane. Interacts with target proteins during their translocation into the lumen of the endoplasmic reticulum. Protects unfolded target proteins against degradation during ER stress. May facilitate glycosylation of target proteins after termination of ER stress. May modulate the use of N-glycosylation sites on target proteins. This is Stress-associated endoplasmic reticulum protein 1 (SERP1) from Bos taurus (Bovine).